The sequence spans 119 residues: Large ribosomal subunit protein bL20 (119 aa).

The protein belongs to the bacterial ribosomal protein bL20 family.

Binds directly to 23S ribosomal RNA and is necessary for the in vitro assembly process of the 50S ribosomal subunit. It is not involved in the protein synthesizing functions of that subunit. The chain is Large ribosomal subunit protein bL20 from Gluconacetobacter diazotrophicus (strain ATCC 49037 / DSM 5601 / CCUG 37298 / CIP 103539 / LMG 7603 / PAl5).